Reading from the N-terminus, the 215-residue chain is Phosphatidylserine decarboxylase proenzyme (215 aa).

Ser184 functions as the Schiff-base intermediate with substrate; via pyruvic acid in the catalytic mechanism. At Ser184 the chain carries Pyruvic acid (Ser); by autocatalysis.

The protein belongs to the phosphatidylserine decarboxylase family. PSD-A subfamily. As to quaternary structure, heterodimer of a large membrane-associated beta subunit and a small pyruvoyl-containing alpha subunit. Pyruvate is required as a cofactor. Post-translationally, is synthesized initially as an inactive proenzyme. Formation of the active enzyme involves a self-maturation process in which the active site pyruvoyl group is generated from an internal serine residue via an autocatalytic post-translational modification. Two non-identical subunits are generated from the proenzyme in this reaction, and the pyruvate is formed at the N-terminus of the alpha chain, which is derived from the carboxyl end of the proenzyme. The post-translation cleavage follows an unusual pathway, termed non-hydrolytic serinolysis, in which the side chain hydroxyl group of the serine supplies its oxygen atom to form the C-terminus of the beta chain, while the remainder of the serine residue undergoes an oxidative deamination to produce ammonia and the pyruvoyl prosthetic group on the alpha chain.

It localises to the cell membrane. It catalyses the reaction a 1,2-diacyl-sn-glycero-3-phospho-L-serine + H(+) = a 1,2-diacyl-sn-glycero-3-phosphoethanolamine + CO2. It participates in phospholipid metabolism; phosphatidylethanolamine biosynthesis; phosphatidylethanolamine from CDP-diacylglycerol: step 2/2. Catalyzes the formation of phosphatidylethanolamine (PtdEtn) from phosphatidylserine (PtdSer). In Ralstonia pickettii (strain 12J), this protein is Phosphatidylserine decarboxylase proenzyme.